Here is a 139-residue protein sequence, read N- to C-terminus: uncharacterized protein (139 aa).

To E.coli YebE.

This is an uncharacterized protein from Yersinia enterocolitica.